Consider the following 207-residue polypeptide: Small ribosomal subunit protein uS4 (207 aa).

The disordered stretch occupies residues 30–54; sequence DKCKLDSKPGQHGRTSGARTSDYGN. Polar residues predominate over residues 42–53; the sequence is GRTSGARTSDYG. The region spanning 97–160 is the S4 RNA-binding domain; that stretch reads SRLDNVVYRM…KKQVRIAEAL (64 aa).

Belongs to the universal ribosomal protein uS4 family. In terms of assembly, part of the 30S ribosomal subunit. Contacts protein S5. The interaction surface between S4 and S5 is involved in control of translational fidelity.

Functionally, one of the primary rRNA binding proteins, it binds directly to 16S rRNA where it nucleates assembly of the body of the 30S subunit. In terms of biological role, with S5 and S12 plays an important role in translational accuracy. This is Small ribosomal subunit protein uS4 from Cupriavidus taiwanensis (strain DSM 17343 / BCRC 17206 / CCUG 44338 / CIP 107171 / LMG 19424 / R1) (Ralstonia taiwanensis (strain LMG 19424)).